The following is a 275-amino-acid chain: Dermonecrotic toxin LhSicTox-alphaIV2 (275 aa).

Histidine 5 is a catalytic residue. Positions 25 and 27 each coordinate Mg(2+). Catalysis depends on histidine 41, which acts as the Nucleophile. 2 disulfide bridges follow: cysteine 45/cysteine 51 and cysteine 47/cysteine 192. A Mg(2+)-binding site is contributed by aspartate 85.

Belongs to the arthropod phospholipase D family. Class II subfamily. Mg(2+) serves as cofactor. Expressed by the venom gland.

Its subcellular location is the secreted. The enzyme catalyses an N-(acyl)-sphingosylphosphocholine = an N-(acyl)-sphingosyl-1,3-cyclic phosphate + choline. The catalysed reaction is an N-(acyl)-sphingosylphosphoethanolamine = an N-(acyl)-sphingosyl-1,3-cyclic phosphate + ethanolamine. It carries out the reaction a 1-acyl-sn-glycero-3-phosphocholine = a 1-acyl-sn-glycero-2,3-cyclic phosphate + choline. It catalyses the reaction a 1-acyl-sn-glycero-3-phosphoethanolamine = a 1-acyl-sn-glycero-2,3-cyclic phosphate + ethanolamine. Dermonecrotic toxins cleave the phosphodiester linkage between the phosphate and headgroup of certain phospholipids (sphingolipid and lysolipid substrates), forming an alcohol (often choline) and a cyclic phosphate. This toxin acts on sphingomyelin (SM). It may also act on ceramide phosphoethanolamine (CPE), lysophosphatidylcholine (LPC) and lysophosphatidylethanolamine (LPE), but not on lysophosphatidylserine (LPS), and lysophosphatidylglycerol (LPG). It acts by transphosphatidylation, releasing exclusively cyclic phosphate products as second products. Induces dermonecrosis, hemolysis, increased vascular permeability, edema, inflammatory response, and platelet aggregation. This Loxosceles hirsuta (Recluse spider) protein is Dermonecrotic toxin LhSicTox-alphaIV2.